We begin with the raw amino-acid sequence, 347 residues long: MRQTIYLTVNLMQNWVERWILDWANILTWKTLCHQTKIGLPNGAQAFVSAQTSTIPKTAFTAHDFVDYTLPQEQKGKEQKEQQWMKNSQTKDTDVHPYADFAVLEILLFPDSSTDRKIFNHFIQPAIRAYKQLGDSLNIFANQTLDQPKHNRYYLLGYPFLRNKAASLFLNQTEQRKEHMDKTTQILHEKPFVVLTDPAKPTLIRNKGANFTGNTWTSNYDLSKKSGLYHKFLGKKYQIYGKSIVISDLNLSSGSSGSLLLNDRKQIVGIYFGVDGPKDELGFSQLLRWQAKNNDEEKDSVAYDLIFGNKNTTKYYAQFAKEHKTHLYEQIDRSNDQQFTFVKNQKC.

The protein belongs to the MG067/MG068/MG395 family.

This is an uncharacterized protein from Mycoplasma pneumoniae (strain ATCC 29342 / M129 / Subtype 1) (Mycoplasmoides pneumoniae).